Consider the following 114-residue polypeptide: T cell receptor beta variable 27 (114 aa).

The first 21 residues, 1 to 21 (MGPQLLGYVVLCLLGAGPLEA), serve as a signal peptide directing secretion. The 93-residue stretch at 22–114 (QVTQNPRYLI…TSLYFCASSL (93 aa)) folds into the Ig-like domain. Residues Cys42 and Cys110 are joined by a disulfide bond. The N-linked (GlcNAc...) asparagine glycan is linked to Asn103.

As to quaternary structure, alpha-beta TR is a heterodimer composed of an alpha and beta chain; disulfide-linked. The alpha-beta TR is associated with the transmembrane signaling CD3 coreceptor proteins to form the TR-CD3 (TcR or TCR). The assembly of alpha-beta TR heterodimers with CD3 occurs in the endoplasmic reticulum where a single alpha-beta TR heterodimer associates with one CD3D-CD3E heterodimer, one CD3G-CD3E heterodimer and one CD247 homodimer forming a stable octameric structure. CD3D-CD3E and CD3G-CD3E heterodimers preferentially associate with TR alpha and TR beta chains, respectively. The association of the CD247 homodimer is the last step of TcR assembly in the endoplasmic reticulum and is required for transport to the cell surface.

It localises to the cell membrane. Its function is as follows. V region of the variable domain of T cell receptor (TR) beta chain that participates in the antigen recognition. Alpha-beta T cell receptors are antigen specific receptors which are essential to the immune response and are present on the cell surface of T lymphocytes. Recognize peptide-major histocompatibility (MH) (pMH) complexes that are displayed by antigen presenting cells (APC), a prerequisite for efficient T cell adaptive immunity against pathogens. Binding of alpha-beta TR to pMH complex initiates TR-CD3 clustering on the cell surface and intracellular activation of LCK that phosphorylates the ITAM motifs of CD3G, CD3D, CD3E and CD247 enabling the recruitment of ZAP70. In turn ZAP70 phosphorylates LAT, which recruits numerous signaling molecules to form the LAT signalosome. The LAT signalosome propagates signal branching to three major signaling pathways, the calcium, the mitogen-activated protein kinase (MAPK) kinase and the nuclear factor NF-kappa-B (NF-kB) pathways, leading to the mobilization of transcription factors that are critical for gene expression and essential for T cell growth and differentiation. The T cell repertoire is generated in the thymus, by V-(D)-J rearrangement. This repertoire is then shaped by intrathymic selection events to generate a peripheral T cell pool of self-MH restricted, non-autoaggressive T cells. Post-thymic interaction of alpha-beta TR with the pMH complexes shapes TR structural and functional avidity. This chain is T cell receptor beta variable 27, found in Homo sapiens (Human).